A 76-amino-acid polypeptide reads, in one-letter code: YPERPIIFYAVCYMMVSLIFFIGFLLEDRVACNASSPAQYKASTVTQGSHNKACTMLFMVLYFFTMAGSVWWVILR.

Residues Tyr1 to Pro5 are Cytoplasmic-facing. The helical transmembrane segment at Ile6 to Leu26 threads the bilayer. Residues Glu27–Cys54 are Extracellular-facing. Asn33 is a glycosylation site (N-linked (GlcNAc...) asparagine). The chain crosses the membrane as a helical span at residues Thr55–Leu75. Arg76 is a topological domain (cytoplasmic).

This sequence belongs to the G-protein coupled receptor Fz/Smo family.

The protein resides in the membrane. It localises to the cell membrane. The protein localises to the cell surface. It is found in the apical cell membrane. Its function is as follows. Receptor for Wnt proteins. Most of frizzled receptors are coupled to the beta-catenin canonical signaling pathway, which leads to the activation of disheveled proteins, inhibition of GSK-3 kinase, nuclear accumulation of beta-catenin and activation of Wnt target genes. A second signaling pathway involving PKC and calcium fluxes has been seen for some family members, but it is not yet clear if it represents a distinct pathway or if it can be integrated in the canonical pathway, as PKC seems to be required for Wnt-mediated inactivation of GSK-3 kinase. Both pathways seem to involve interactions with G-proteins. May be involved in transduction and intercellular transmission of polarity information during tissue morphogenesis and/or in differentiated tissues. Plays a role in controlling early axon growth and guidance processes necessary for the formation of a subset of central and peripheral major fiber tracts. Involved in the migration of cranial neural crest cells. May also be implicated in the transmission of sensory information from the trunk and limbs to the brain. Controls commissural sensory axons guidance after midline crossing along the anterior-posterior axis in the developing spinal cord in a Wnt-dependent signaling pathway. Together with FZD6, is involved in the neural tube closure and plays a role in the regulation of the establishment of planar cell polarity (PCP). Promotes neurogenesis by maintaining sympathetic neuroblasts within the cell cycle in a beta-catenin-dependent manner. The chain is Frizzled-3 (FZD3) from Gallus gallus (Chicken).